We begin with the raw amino-acid sequence, 272 residues long: HMP-PP phosphatase (272 aa).

The active-site Nucleophile is D8. Residues D8, D10, and D212 each coordinate Mg(2+).

This sequence belongs to the HAD-like hydrolase superfamily. Cof family. Requires Mg(2+) as cofactor.

It catalyses the reaction 4-amino-2-methyl-5-(diphosphooxymethyl)pyrimidine + H2O = 4-amino-2-methyl-5-(phosphooxymethyl)pyrimidine + phosphate + H(+). Catalyzes the hydrolysis of 4-amino-2-methyl-5-hydroxymethylpyrimidine pyrophosphate (HMP-PP) to 4-amino-2-methyl-5-hydroxymethylpyrimidine phosphate (HMP-P). This is HMP-PP phosphatase from Salmonella schwarzengrund (strain CVM19633).